Here is a 60-residue protein sequence, read N- to C-terminus: Large ribosomal subunit protein uL30 (60 aa).

Belongs to the universal ribosomal protein uL30 family. As to quaternary structure, part of the 50S ribosomal subunit.

This is Large ribosomal subunit protein uL30 from Acidothermus cellulolyticus (strain ATCC 43068 / DSM 8971 / 11B).